Here is a 170-residue protein sequence, read N- to C-terminus: Photosystem II extrinsic protein V (170 aa).

The N-terminal stretch at 1–33 is a signal peptide; it reads MASVFSSLRRSLKGLLVLIPVLIGLAVTSPAQA. Heme c contacts are provided by Cys70, Cys73, His74, and His125.

Belongs to the cytochrome c family. PsbV subfamily. In terms of assembly, PSII is composed of 1 copy each of membrane proteins PsbA, PsbB, PsbC, PsbD, PsbE, PsbF, PsbH, PsbI, PsbJ, PsbK, PsbL, PsbM, PsbT, PsbX, PsbY, PsbZ, Psb30/Ycf12, peripheral proteins PsbO, CyanoQ (PsbQ), PsbU, PsbV and a large number of cofactors. It forms dimeric complexes. Heme c serves as cofactor.

It localises to the cellular thylakoid membrane. In terms of biological role, one of the extrinsic, lumenal subunits of photosystem II (PSII). PSII is a light-driven water plastoquinone oxidoreductase, using light energy to abstract electrons from H(2)O, generating a proton gradient subsequently used for ATP formation. The extrinsic proteins stabilize the structure of photosystem II oxygen-evolving complex (OEC), the ion environment of oxygen evolution and protect the OEC against heat-induced inactivation. Low-potential cytochrome c that plays a role in the OEC of PSII. The sequence is that of Photosystem II extrinsic protein V from Synechococcus sp. (strain CC9605).